A 431-amino-acid chain; its full sequence is tRNA-2-methylthio-N(6)-dimethylallyladenosine synthase (431 aa).

An MTTase N-terminal domain is found at 4 to 120 (RAVYIKTFGC…IENIIENQVS (117 aa)). 6 residues coordinate [4Fe-4S] cluster: cysteine 13, cysteine 49, cysteine 83, cysteine 154, cysteine 158, and cysteine 161. In terms of domain architecture, Radical SAM core spans 140-367 (RKDCVKAWVN…LKLQDEITER (228 aa)). The region spanning 370–430 (KRLEGKIQEV…RHSLEGDIIS (61 aa)) is the TRAM domain.

The protein belongs to the methylthiotransferase family. MiaB subfamily. In terms of assembly, monomer. It depends on [4Fe-4S] cluster as a cofactor.

Its subcellular location is the cytoplasm. It carries out the reaction N(6)-dimethylallyladenosine(37) in tRNA + (sulfur carrier)-SH + AH2 + 2 S-adenosyl-L-methionine = 2-methylsulfanyl-N(6)-dimethylallyladenosine(37) in tRNA + (sulfur carrier)-H + 5'-deoxyadenosine + L-methionine + A + S-adenosyl-L-homocysteine + 2 H(+). Catalyzes the methylthiolation of N6-(dimethylallyl)adenosine (i(6)A), leading to the formation of 2-methylthio-N6-(dimethylallyl)adenosine (ms(2)i(6)A) at position 37 in tRNAs that read codons beginning with uridine. The protein is tRNA-2-methylthio-N(6)-dimethylallyladenosine synthase of Thermodesulfovibrio yellowstonii (strain ATCC 51303 / DSM 11347 / YP87).